Here is a 454-residue protein sequence, read N- to C-terminus: Bifunctional protein GlmU (454 aa).

Residues 1–226 (MSLEIVILAA…AMEVQGVNDR (226 aa)) are pyrophosphorylase. Residues 8-11 (LAAG), Lys-22, Gln-73, 78-79 (GT), 99-101 (YGD), Gly-136, Glu-151, Asn-166, and Asn-224 each bind UDP-N-acetyl-alpha-D-glucosamine. Asp-101 contributes to the Mg(2+) binding site. Asn-224 contributes to the Mg(2+) binding site. Residues 227–247 (MQQAQLERHYQRLRAEELMRQ) are linker. Positions 248–454 (GVTLLDPQRL…NWKRPEKIKK (207 aa)) are N-acetyltransferase. The UDP-N-acetyl-alpha-D-glucosamine site is built by Arg-330 and Lys-348. The active-site Proton acceptor is His-360. UDP-N-acetyl-alpha-D-glucosamine is bound by residues Tyr-363 and Asn-374. Residues Ala-377, 383 to 384 (NY), Ser-402, Ala-420, and Arg-437 contribute to the acetyl-CoA site.

The protein in the N-terminal section; belongs to the N-acetylglucosamine-1-phosphate uridyltransferase family. This sequence in the C-terminal section; belongs to the transferase hexapeptide repeat family. As to quaternary structure, homotrimer. Mg(2+) is required as a cofactor.

The protein localises to the cytoplasm. The catalysed reaction is alpha-D-glucosamine 1-phosphate + acetyl-CoA = N-acetyl-alpha-D-glucosamine 1-phosphate + CoA + H(+). It carries out the reaction N-acetyl-alpha-D-glucosamine 1-phosphate + UTP + H(+) = UDP-N-acetyl-alpha-D-glucosamine + diphosphate. The protein operates within nucleotide-sugar biosynthesis; UDP-N-acetyl-alpha-D-glucosamine biosynthesis; N-acetyl-alpha-D-glucosamine 1-phosphate from alpha-D-glucosamine 6-phosphate (route II): step 2/2. Its pathway is nucleotide-sugar biosynthesis; UDP-N-acetyl-alpha-D-glucosamine biosynthesis; UDP-N-acetyl-alpha-D-glucosamine from N-acetyl-alpha-D-glucosamine 1-phosphate: step 1/1. It participates in bacterial outer membrane biogenesis; LPS lipid A biosynthesis. Functionally, catalyzes the last two sequential reactions in the de novo biosynthetic pathway for UDP-N-acetylglucosamine (UDP-GlcNAc). The C-terminal domain catalyzes the transfer of acetyl group from acetyl coenzyme A to glucosamine-1-phosphate (GlcN-1-P) to produce N-acetylglucosamine-1-phosphate (GlcNAc-1-P), which is converted into UDP-GlcNAc by the transfer of uridine 5-monophosphate (from uridine 5-triphosphate), a reaction catalyzed by the N-terminal domain. In Pseudomonas aeruginosa (strain ATCC 15692 / DSM 22644 / CIP 104116 / JCM 14847 / LMG 12228 / 1C / PRS 101 / PAO1), this protein is Bifunctional protein GlmU.